The following is a 140-amino-acid chain: Nucleoside diphosphate kinase (140 aa).

ATP contacts are provided by K11, F59, R87, T93, R104, and N114. H117 serves as the catalytic Pros-phosphohistidine intermediate.

Belongs to the NDK family. In terms of assembly, homotetramer. Requires Mg(2+) as cofactor.

The protein resides in the cytoplasm. It catalyses the reaction a 2'-deoxyribonucleoside 5'-diphosphate + ATP = a 2'-deoxyribonucleoside 5'-triphosphate + ADP. The enzyme catalyses a ribonucleoside 5'-diphosphate + ATP = a ribonucleoside 5'-triphosphate + ADP. Functionally, major role in the synthesis of nucleoside triphosphates other than ATP. The ATP gamma phosphate is transferred to the NDP beta phosphate via a ping-pong mechanism, using a phosphorylated active-site intermediate. This is Nucleoside diphosphate kinase from Rickettsia bellii (strain OSU 85-389).